The following is a 364-amino-acid chain: Sorbitol dehydrogenase (364 aa).

Cys-54 is a binding site for Zn(2+). Tyr-60 provides a ligand contact to substrate. Residues His-79 and Glu-80 each contribute to the Zn(2+) site. Glu-165 contributes to the substrate binding site. NAD(+)-binding positions include Ile-193, Asp-213, Arg-218, 284–286 (VGM), and 308–310 (VFR). 2 residues coordinate substrate: Arg-310 and Tyr-311.

The protein belongs to the zinc-containing alcohol dehydrogenase family. Homotetramer. The cofactor is Zn(2+). Mostly expressed in dry seeds and leaves, and, to a lower extent, in roots, stems, flowers and siliques (at protein level).

Its subcellular location is the mitochondrion membrane. It localises to the cell membrane. It is found in the cytoplasm. The protein localises to the cytosol. The enzyme catalyses keto-D-fructose + NADH + H(+) = D-sorbitol + NAD(+). It catalyses the reaction ribitol + NAD(+) = D-ribulose + NADH + H(+). It carries out the reaction xylitol + NAD(+) = D-xylulose + NADH + H(+). Polyol dehydrogenase that catalyzes the NAD(+)-dependent oxidation of various sugar alcohols. Is mostly active with D-sorbitol (D-glucitol), ribitol and xylitol as substrates, leading to the C2-oxidized products D-fructose, D-ribulose and D-xylulose, respectively. To a lesser extent, can also oxidize arabitol, mannitol, lactitol and maltitol in vitro. Is required for sorbitol metabolism. Cannot use NADP(+) as the electron acceptor. This chain is Sorbitol dehydrogenase (SDH), found in Arabidopsis thaliana (Mouse-ear cress).